Consider the following 115-residue polypeptide: MKNKFVELVEKSQIRTDLPEFNPGDSITVNLWIKEGDKQRIQAFKGFVLRKRNRGLHSAFTVRKMSSGMGVERTFQTHSPLIDSITVEKRADVRRAKLYYMRGLTGKAARIKEKV.

Belongs to the bacterial ribosomal protein bL19 family.

Its function is as follows. This protein is located at the 30S-50S ribosomal subunit interface and may play a role in the structure and function of the aminoacyl-tRNA binding site. This is Large ribosomal subunit protein bL19 from Francisella philomiragia subsp. philomiragia (strain ATCC 25017 / CCUG 19701 / FSC 153 / O#319-036).